The sequence spans 1699 residues: MDKLKINNNLSPPSSPSSSTTTPNLSSTNLENNLNSNINNNINNFNLNNSTNTFNNSNNIIINNNNNNNNNNNNNNNNNNNNSNNNNNNINNNNPNVNSPNEVILNNNFLKQNKKGFFKRNKKMIEIFLPPKFKSPIYRRCCILLGECGVYVFIYMFFLIFLRSFYPIFICGIVSMIVLYIVSTKTTKYKLVALIYIFVQSILNFTFFLQITNNFNNNTVNINNTDDYSNEVIEFSKLNFLFIMNLILSLISIQIFFPKFTFSITLTCSLNIFNIIIHLISIYSLNTKKLIVFQNLIVPITVSFLLSFYSYILSIDNQEIEAKEKRFRNIFDTSSEALVIHKNGLIIDVNSTFEKIFQIKQSDLINGTIWEYLPELESFFQNTNGNSKYTNQSLQQQLQQQQQQQQQLYNTITNGGNNKQTSTTSANSTPRYNNYNNNNINSNNLNNLNVFNNLNNLNNLNNNNNNHHIHKVSRSNTGLSDSSSIFDDSDSVDFFSMKNINKCPIVLDTVGITPCGSEFCAQVKIERKKDMLIGSGTSSFNLLNNNNNNNNNNNNNNNNNNNNNNNNNNSNNNNNNNSNNNNNNNNINNNISNNIINNNNNNNNSGIITNLSQQSNNLSTTNLNTSSKIINHKHKNSKQDFDVMSIVDISAKKKLMIADQALRRAEELNQAKINFLTTVSHEVRTPINGILASVEILDGSQLDVTQRDFLSCIKQSADYLLDLITDILDFSKIEAGKFELDRVEFNLITMLEESINIVYRTAQERGIEVLTFIDPDVPIILIGDPYRVKQCVLNFLSNAIKFTHKGQVMVKVSIVDQINNNNNNNNNNNNNNNNNNNNNNNNNNNNNNKIVGFSNNNNNNNNNNNNGNNGILNFKLSFSVEDSGVGIKEEVLDCLFTPFHQLGGSPRKYLGTGLGLSISKKLTTLMGGEIGVKSVYGVGSAFSFTSILSTTSTTPISLQSLGSSLSIALNNLSPTIPKISGFIYDDNIHTSNSLFNFLKLMNINLKIINPIINNNNNNNNNNNNNNNNNNNNNNNNNNNNNDNNNNNNNNNDNNIDQQQLKFEFENEIDKYCNVEDDNNNVILIITNQLSNDNLNYFKDKINQLNNSIYWFVLCDNGLKAIDPFYYGIVKKPNNLLNLVDTVFKVYNCQLPQDLYQLLTNGSKDDYKNYLKYRNVVIKKITEDNEKKQQQQQQQQQQMGDTLSSTKSPQYTNLPPLDISSSSNGSLNKSNRSNLLRKSSSVYSDHVAITRGMVQVNRSPRPSTPPPLFNLKGNNSNPNSTELNSTNSVNGNPNNDSTLETIEPLNISETVGDLCSSGSVINNSNFIINNNFLTSSPYGSCLTPNSGTTSPSIPININNNDNNNNNNNNNNNNNNNNNNNNNNNNNNNNNNNNSFKKLEPDNFSPPPSILINDNNIIPALNVTTPITISTSTSSSSSLLINNEINNKSTTSKRPSFIPPLDIQSKKLIINTADENHKNNCIIDFEQIFGQDGKQQPQQQQQQQQQQQQQQQQQQQQQQQQQQQQQQQQQQQQQQQKLNIGNQQQQQILSSPRLQSQLLSNCDSLGNTPPVTPHRRNALIVDDTELNRKVLAQLLRRMDWSVSFAENGIEALKEITSERCFDIIFMDCQMPILDGFETTKLLRLRELENNWKPLNIVALSADSSSSFGQVCFDCGMNGYLGKPITLITLKDTLLKWGGYRD.

2 disordered regions span residues 1–32 (MDKLKINNNLSPPSSPSSSTTTPNLSSTNLEN) and 58–97 (NNIIINNNNNNNNNNNNNNNNNNNNSNNNNNNINNNNPNV). A compositionally biased stretch (low complexity) spans 7–32 (NNNLSPPSSPSSSTTTPNLSSTNLEN). The next 6 membrane-spanning stretches (helical) occupy residues 142-162 (CILLGECGVYVFIYMFFLIFL), 164-184 (SFYPIFICGIVSMIVLYIVST), 191-211 (LVALIYIFVQSILNFTFFLQI), 238-258 (LNFLFIMNLILSLISIQIFFP), 262-282 (FSITLTCSLNIFNIIIHLISI), and 295-315 (NLIVPITVSFLLSFYSYILSI). Residues 412-432 (ITNGGNNKQTSTTSANSTPRY) are compositionally biased toward polar residues. Disordered regions lie at residues 412-439 (ITNGGNNKQTSTTSANSTPRYNNYNNNN) and 542-593 (LLNN…NISN). Over residues 544–593 (NNNNNNNNNNNNNNNNNNNNNNNNNNSNNNNNNNSNNNNNNNNINNNISN) the composition is skewed to low complexity. Positions 678–950 (TVSHEVRTPI…AFSFTSILST (273 aa)) constitute a Histidine kinase domain. His-681 bears the Phosphohistidine; by autocatalysis mark. Disordered regions lie at residues 819 to 866 (NNNN…NNNN), 1018 to 1054 (NNNNNNNNNNNNNNNNNNNNNNNNDNNNNNNNNNDNN), 1186 to 1239 (KKQQ…RKSS), 1252 to 1294 (MVQV…NPNN), and 1351 to 1406 (SIPI…SPPP). A compositionally biased stretch (polar residues) spans 1198–1212 (MGDTLSSTKSPQYTN). Positions 1219–1239 (SSSSNGSLNKSNRSNLLRKSS) are enriched in low complexity. Positions 1271 to 1282 (KGNNSNPNSTEL) are enriched in polar residues. Composition is skewed to low complexity over residues 1283 to 1294 (NSTNSVNGNPNN) and 1355 to 1392 (NINNNDNNNNNNNNNNNNNNNNNNNNNNNNNNNNNNNN). Positions 1575-1695 (NALIVDDTEL…TLKDTLLKWG (121 aa)) constitute a Response regulatory domain. Position 1625 is a 4-aspartylphosphate (Asp-1625).

It localises to the membrane. The enzyme catalyses ATP + protein L-histidine = ADP + protein N-phospho-L-histidine.. In terms of biological role, may act in a signal transduction pathway. This protein undergoes an ATP-dependent autophosphorylation at a conserved histidine residue in the kinase core, and a phosphoryl group is then transferred to a conserved aspartate residue in the receiver domain. The chain is Hybrid signal transduction histidine kinase E (dhkE) from Dictyostelium discoideum (Social amoeba).